The following is a 128-amino-acid chain: Nucleoside diphosphate kinase B (128 aa).

Met-1 carries the N-acetylmethionine modification. ATP-binding residues include Lys-9, Phe-39, Thr-70, Arg-81, and Asn-91. His-94 functions as the Pros-phosphohistidine intermediate in the catalytic mechanism.

This sequence belongs to the NDK family. It depends on Mg(2+) as a cofactor.

The protein localises to the cytoplasm. Its subcellular location is the nucleus. It is found in the cell projection. The protein resides in the lamellipodium. It localises to the ruffle. It carries out the reaction a 2'-deoxyribonucleoside 5'-diphosphate + ATP = a 2'-deoxyribonucleoside 5'-triphosphate + ADP. The catalysed reaction is a ribonucleoside 5'-diphosphate + ATP = a ribonucleoside 5'-triphosphate + ADP. In terms of biological role, major role in the synthesis of nucleoside triphosphates other than ATP. The protein is Nucleoside diphosphate kinase B (nme2) of Merluccius australis australis (Austral hake).